A 499-amino-acid chain; its full sequence is Ethanolamine-phosphate phospho-lyase (499 aa).

At Lys278 the chain carries N6-(pyridoxal phosphate)lysine.

This sequence belongs to the class-III pyridoxal-phosphate-dependent aminotransferase family. In terms of assembly, homotetramer. The cofactor is pyridoxal 5'-phosphate.

The protein resides in the mitochondrion. The catalysed reaction is phosphoethanolamine + H2O = acetaldehyde + NH4(+) + phosphate. Catalyzes the pyridoxal-phosphate-dependent breakdown of phosphoethanolamine, converting it to ammonia, inorganic phosphate and acetaldehyde. The protein is Ethanolamine-phosphate phospho-lyase (Etnppl) of Mus musculus (Mouse).